A 239-amino-acid chain; its full sequence is Segregation and condensation protein A (239 aa).

The protein belongs to the ScpA family. Component of a cohesin-like complex composed of ScpA, ScpB and the Smc homodimer, in which ScpA and ScpB bind to the head domain of Smc. The presence of the three proteins is required for the association of the complex with DNA.

The protein localises to the cytoplasm. In terms of biological role, participates in chromosomal partition during cell division. May act via the formation of a condensin-like complex containing Smc and ScpB that pull DNA away from mid-cell into both cell halves. The polypeptide is Segregation and condensation protein A (Streptococcus suis (strain 98HAH33)).